The chain runs to 317 residues: MKPLNIIFAGTPDFAAQHLQALLQSQHNVLAVYTQPDKPAGRGQTLRASAVKILAEKHHIPVYQPKSLRKVEVQEHLSKLNADVMVVVAYGLILPLAVLQTFPLGCLNVHGSLLPRWRGAAPIQRAIWAGDKKTGVTIMQMNEGLDTGDMLHKVCCDITPTETSTSLYTKLANIAPKALLEVLDGLEQGLFKAEVQDESLSNYAEKLSKEEAKLDWSLSAEQLERCIRAFNPWPMSYFVTQDSQGTLQTLKVYQASVLPHQNKPCGTILAADKRGIQVATANGVLNLEQLQPAGKKPMSARDLLNSRADWFKIGQVL.

Residue 112–115 (SLLP) participates in (6S)-5,6,7,8-tetrahydrofolate binding.

Belongs to the Fmt family.

The catalysed reaction is L-methionyl-tRNA(fMet) + (6R)-10-formyltetrahydrofolate = N-formyl-L-methionyl-tRNA(fMet) + (6S)-5,6,7,8-tetrahydrofolate + H(+). In terms of biological role, attaches a formyl group to the free amino group of methionyl-tRNA(fMet). The formyl group appears to play a dual role in the initiator identity of N-formylmethionyl-tRNA by promoting its recognition by IF2 and preventing the misappropriation of this tRNA by the elongation apparatus. This is Methionyl-tRNA formyltransferase from Histophilus somni (strain 2336) (Haemophilus somnus).